The primary structure comprises 1964 residues: Neurogenic locus notch homolog protein 4 (1964 aa).

Residues 1–20 form the signal peptide; that stretch reads MQPQLLLLLLLPLNFPVILT. EGF-like domains follow at residues 21–60, 61–112, 115–152, and 153–189; these read RELL…ETCQ, FPDP…DRCQ, LEEL…EQCQ, and LRDF…HTCE. At 21–1443 the chain is on the extracellular side; it reads RELLCGGSPE…TRPSANQLPW (1423 aa). Cystine bridges form between Cys-25-Cys-38, Cys-32-Cys-48, Cys-50-Cys-59, Cys-65-Cys-77, Cys-71-Cys-100, Cys-102-Cys-111, Cys-119-Cys-130, Cys-124-Cys-140, Cys-142-Cys-151, Cys-157-Cys-168, Cys-162-Cys-177, Cys-179-Cys-188, Cys-195-Cys-208, Cys-202-Cys-217, Cys-219-Cys-228, Cys-235-Cys-246, Cys-240-Cys-259, Cys-261-Cys-270, Cys-277-Cys-288, Cys-282-Cys-297, Cys-299-Cys-308, Cys-315-Cys-329, Cys-323-Cys-338, Cys-340-Cys-349, Cys-356-Cys-367, Cys-361-Cys-376, Cys-378-Cys-387, Cys-393-Cys-404, Cys-398-Cys-415, Cys-417-Cys-426, Cys-433-Cys-449, Cys-443-Cys-458, Cys-460-Cys-469, Cys-476-Cys-487, Cys-481-Cys-496, Cys-498-Cys-507, Cys-514-Cys-525, Cys-519-Cys-534, Cys-536-Cys-545, Cys-552-Cys-563, Cys-557-Cys-572, Cys-574-Cys-583, Cys-590-Cys-601, Cys-595-Cys-610, Cys-612-Cys-621, Cys-626-Cys-637, Cys-631-Cys-646, Cys-648-Cys-655, Cys-662-Cys-669, Cys-664-Cys-674, Cys-676-Cys-685, Cys-692-Cys-703, Cys-697-Cys-712, Cys-714-Cys-723, Cys-730-Cys-741, Cys-735-Cys-750, Cys-752-Cys-761, Cys-768-Cys-779, Cys-773-Cys-788, Cys-790-Cys-799, Cys-807-Cys-818, Cys-812-Cys-827, Cys-829-Cys-838, Cys-845-Cys-856, Cys-850-Cys-865, Cys-867-Cys-876, Cys-882-Cys-903, Cys-897-Cys-912, Cys-914-Cys-923, Cys-930-Cys-941, Cys-935-Cys-950, Cys-952-Cys-961, Cys-968-Cys-979, Cys-973-Cys-988, Cys-990-Cys-999, Cys-1006-Cys-1019, Cys-1011-Cys-1028, Cys-1030-Cys-1039, Cys-1046-Cys-1057, Cys-1051-Cys-1069, Cys-1071-Cys-1080, Cys-1087-Cys-1098, Cys-1092-Cys-1110, Cys-1112-Cys-1121, Cys-1130-Cys-1142, Cys-1136-Cys-1155, Cys-1157-Cys-1166, Cys-1174-Cys-1187, Cys-1183-Cys-1199, Cys-1210-Cys-1234, Cys-1216-Cys-1229, Cys-1225-Cys-1241, Cys-1247-Cys-1273, Cys-1255-Cys-1268, and Cys-1264-Cys-1280. In terms of domain architecture, EGF-like 5; calcium-binding spans 191-229; the sequence is DINECFLEPGPCPQGTSCHNTLGSYQCLCPVGQEGPQCK. One can recognise an EGF-like 6 domain in the interval 231 to 271; that stretch reads RKGACPPGSCLNGGTCQLVPEGHSTFHLCLCPPGFTGLDCE. Residues 273 to 309 form the EGF-like 7; calcium-binding domain; it reads NPDDCVRHQCQNGATCLDGLDTYTCLCPKTWKGWDCS. The EGF-like 8; calcium-binding domain occupies 311-350; it reads DIDECEARGPPRCRNGGTCQNTAGSFHCVCVSGWGGAGCE. One can recognise an EGF-like 9; calcium-binding domain in the interval 352 to 388; it reads NLDDCAAATCAPGSTCIDRVGSFSCLCPPGRTGLLCH. The EGF-like 10 domain occupies 389–427; it reads LEDMCLSQPCHVNAQCSTNPLTGSTLCICQPGYSGSTCH. Positions 429 to 470 constitute an EGF-like 11; calcium-binding domain; sequence DLDECQMAQQGPSPCEHGGSCINTPGSFNCLCLPGYTGSRCE. The EGF-like 12; calcium-binding domain occupies 472-508; that stretch reads DHNECLSQPCHPGSTCLDLLATFHCLCPPGLEGRLCE. Residues 510 to 546 enclose the EGF-like 13; calcium-binding domain; it reads EVNECTSNPCLNQAACHDLLNGFQCLCLPGFTGARCE. The EGF-like 14; calcium-binding domain maps to 548–584; sequence DMDECSSTPCANGGRCRDQPGAFYCECLPGFEGPHCE. One can recognise an EGF-like 15; calcium-binding domain in the interval 586–622; it reads EVDECLSDPCPVGASCLDLPGAFFCLCRPGFTGQLCE. EGF-like domains lie at 623-656, 658-686, 688-724, 726-762, 764-800, 803-839, 841-877, 878-924, 926-962, 964-1000, 1002-1040, 1042-1081, 1083-1122, and 1126-1167; these read VPLC…PGCV, AEDN…PECE, ELGG…LTCS, EVTA…RHCQ, AVDH…LHCE, TNPS…SSCQ, LIDL…ALCD, FPLS…KLCQ, NVNP…QNCS, VLDA…LRCE, DVDE…QRCE, EMDL…PTCS, KALS…PDCL, and APPG…PRCQ. A glycan (N-linked (GlcNAc...) asparagine) is linked at Asn-711. The N-linked (GlcNAc...) asparagine glycan is linked to Asn-960. The N-linked (GlcNAc...) asparagine glycan is linked to Asn-1139. LNR repeat units follow at residues 1166 to 1209, 1210 to 1241, and 1247 to 1287; these read CQRP…PWKG, CPPH…GYDC, and CIPA…GEDS. The interval 1345–1369 is disordered; sequence EELSGARDSSSWERQAPPTQPLGKE. Residues 1444 to 1464 traverse the membrane as a helical segment; the sequence is PILCSPVVGVLLLALGALLVL. The Cytoplasmic segment spans residues 1465–1964; the sequence is QLIRRRRREH…PLNSVVRNLN (500 aa). Residues 1516–1535 are disordered; it reads VDEDGVAMCSGPEEGEAEET. ANK repeat units follow at residues 1628-1657, 1661-1691, 1695-1724, 1728-1757, and 1761-1790; these read TGET…NPNQ, AGRT…TVDA, DGTT…DVGA, RGKT…DKDA, and REQT…ARGL. Residues 1879-1907 are disordered; sequence RSGSCGGPTTRGRRFSAGSRGRRGARASQ.

It belongs to the NOTCH family. Heterodimer of a C-terminal fragment N(TM) and a N-terminal fragment N(EC) which are probably linked by disulfide bonds. Interacts with MAML1, MAML2 and MAML3 which act as transcriptional coactivators for NOTCH4. In terms of processing, synthesized in the endoplasmic reticulum as an inactive form which is proteolytically cleaved by a furin-like convertase in the trans-Golgi network before it reaches the plasma membrane to yield an active, ligand-accessible form. Cleavage results in a C-terminal fragment N(TM) and a N-terminal fragment N(EC). Following ligand binding, it is cleaved by TNF-alpha converting enzyme (TACE) to yield a membrane-associated intermediate fragment called notch extracellular truncation (NEXT). This fragment is then cleaved by presenilin dependent gamma-secretase to release a notch-derived peptide containing the intracellular domain (NICD) from the membrane. Post-translationally, phosphorylated. In terms of tissue distribution, highly expressed in lung, moderately in heart kidney, and at lower levels in the ovary and skeletal muscle. A very low expression is seen in the brain, intestine, liver and testis.

The protein localises to the cell membrane. It is found in the nucleus. Functionally, functions as a receptor for membrane-bound ligands Jagged1, Jagged2 and Delta1 to regulate cell-fate determination. Upon ligand activation through the released notch intracellular domain (NICD) it forms a transcriptional activator complex with RBPJ/RBPSUH and activates genes of the enhancer of split locus. Affects the implementation of differentiation, proliferation and apoptotic programs. May regulate branching morphogenesis in the developing vascular system. This is Neurogenic locus notch homolog protein 4 from Mus musculus (Mouse).